The following is a 164-amino-acid chain: Protein-export protein SecB (164 aa).

Positions 1–12 (MPDKDEITHDAQ) are enriched in basic and acidic residues. The disordered stretch occupies residues 1–22 (MPDKDEITHDAQSENEESLPLA).

Belongs to the SecB family. Homotetramer, a dimer of dimers. One homotetramer interacts with 1 SecA dimer.

The protein localises to the cytoplasm. Functionally, one of the proteins required for the normal export of preproteins out of the cell cytoplasm. It is a molecular chaperone that binds to a subset of precursor proteins, maintaining them in a translocation-competent state. It also specifically binds to its receptor SecA. The protein is Protein-export protein SecB of Neorickettsia sennetsu (strain ATCC VR-367 / Miyayama) (Ehrlichia sennetsu).